Consider the following 282-residue polypeptide: Anamorsin homolog (282 aa).

The interval 5–151 (VDTNNFVLLL…EVGAKTALSL (147 aa)) is N-terminal SAM-like domain. Residues 152–196 (SFAPKPAQPKAETSAAQIWTLSAQDIDDEDVDLLDSDTLLDEDDL) are linker. [2Fe-2S] cluster-binding residues include Cys-208, Cys-218, Cys-221, and Cys-223. Residues 208–223 (CGPGSGKKKACKNCTC) are fe-S binding site A. 4 residues coordinate [4Fe-4S] cluster: Cys-243, Cys-246, Cys-254, and Cys-257. 2 consecutive short sequence motifs (cx2C motif) follow at residues 243–246 (CGSC) and 254–257 (CSTC). Residues 243–257 (CGSCYLGDAFRCSTC) are fe-S binding site B.

It belongs to the anamorsin family. As to quaternary structure, monomer. The cofactor is [2Fe-2S] cluster. [4Fe-4S] cluster is required as a cofactor.

The protein resides in the cytoplasm. The protein localises to the mitochondrion intermembrane space. Functionally, component of the cytosolic iron-sulfur (Fe-S) protein assembly (CIA) machinery. Required for the maturation of extramitochondrial Fe-S proteins. Part of an electron transfer chain functioning in an early step of cytosolic Fe-S biogenesis, facilitating the de novo assembly of a [4Fe-4S] cluster on the cytosolic Fe-S scaffold complex. Electrons are transferred from NADPH via a FAD- and FMN-containing diflavin oxidoreductase. Together with the diflavin oxidoreductase, also required for the assembly of the diferric tyrosyl radical cofactor of ribonucleotide reductase (RNR), probably by providing electrons for reduction during radical cofactor maturation in the catalytic small subunit. This Nematostella vectensis (Starlet sea anemone) protein is Anamorsin homolog.